The primary structure comprises 230 residues: Large ribosomal subunit protein uL1 (230 aa).

Belongs to the universal ribosomal protein uL1 family. As to quaternary structure, part of the 50S ribosomal subunit.

Functionally, binds directly to 23S rRNA. The L1 stalk is quite mobile in the ribosome, and is involved in E site tRNA release. Its function is as follows. Protein L1 is also a translational repressor protein, it controls the translation of the L11 operon by binding to its mRNA. This Limosilactobacillus reuteri subsp. reuteri (strain JCM 1112) (Lactobacillus reuteri) protein is Large ribosomal subunit protein uL1.